Here is a 383-residue protein sequence, read N- to C-terminus: Na(+)/H(+) antiporter NhaA (383 aa).

11 helical membrane-spanning segments follow: residues 14–34 (AGGILLVIAAAIAMTIANSPL), 47–67 (FGMSVSHWINDGLMAVFFLLI), 87–107 (IFPAIAAVGGMLAPALIYVAF), 117–137 (GWAIPAATDIAFALGIMALLG), 146–166 (VFLLALAIIDDLGVVVIIALF), 171–191 (LSSMALLVGFVMTGVLFMLNA), 205–225 (AILWFAVLKSGVHATLAGVVI), 252–272 (VAFGILPLFAFANAGISLEGV), 280–300 (MLPLGIALGLLIGKPLGIFSF), 321–341 (IFAVSVLCGIGFTMSIFISSL), and 356–376 (LGILMGSTTAAVLGYALLHFS).

Belongs to the NhaA Na(+)/H(+) (TC 2.A.33) antiporter family.

Its subcellular location is the cell inner membrane. It carries out the reaction Na(+)(in) + 2 H(+)(out) = Na(+)(out) + 2 H(+)(in). It catalyses the reaction Li(+)(in) + 2 H(+)(out) = Li(+)(out) + 2 H(+)(in). With respect to regulation, activity is regulated by pH. Active at alkaline pH. Amiloride strongly reduces affinity for Na(+), but does not change the Vmax. In terms of biological role, na(+)/H(+) antiporter that extrudes sodium in exchange for external protons. Can also transport lithium and potassium. The polypeptide is Na(+)/H(+) antiporter NhaA (Vibrio parahaemolyticus serotype O3:K6 (strain RIMD 2210633)).